A 357-amino-acid chain; its full sequence is U5 small nuclear ribonucleoprotein 40 kDa protein (357 aa).

Residue Lys18 forms a Glycyl lysine isopeptide (Lys-Gly) (interchain with G-Cter in SUMO2) linkage. At Arg21 the chain carries Asymmetric dimethylarginine. WD repeat units follow at residues Gly64–Ala103, Gly107–Arg146, Gly149–Thr189, Gln191–Thr230, Gly233–Arg272, Asn283–Lys322, and Gly325–Gln357. Residue Lys270 forms a Glycyl lysine isopeptide (Lys-Gly) (interchain with G-Cter in SUMO2) linkage.

As to quaternary structure, component of the pre-catalytic and catalytic spliceosome complexes. Component of the postcatalytic spliceosome P complex. Part of the U5 snRNP complex. Interacts with PRPF8. Component of the U4/U6-U5 tri-snRNP complex composed of the U4, U6 and U5 snRNAs and at least PRPF3, PRPF4, PRPF6, PRPF8, PRPF31, SNRNP200, TXNL4A, WDR57, SNRNP40, DDX23, CD2BP2, PPIH, SNU13, EFTUD2, SART1 and USP39. Component of the minor spliceosome, which splices U12-type introns.

It is found in the nucleus. In terms of biological role, required for pre-mRNA splicing as component of the activated spliceosome. Component of the U5 small nuclear ribonucleoprotein (snRNP) complex and the U4/U6-U5 tri-snRNP complex, building blocks of the spliceosome. As a component of the minor spliceosome, involved in the splicing of U12-type introns in pre-mRNAs. This is U5 small nuclear ribonucleoprotein 40 kDa protein (SNRNP40) from Homo sapiens (Human).